The following is a 907-amino-acid chain: Aldehyde oxidoreductase (907 aa).

The 78-residue stretch at 2–79 (IQKVITVNGI…GAQITTIEGV (78 aa)) folds into the 2Fe-2S ferredoxin-type domain. The [2Fe-2S] cluster site is built by cysteine 40, cysteine 45, cysteine 48, cysteine 60, cysteine 100, cysteine 103, cysteine 137, and cysteine 139. 2 residues coordinate Mo-molybdopterin cytosine dinucleotide: histidine 653 and glutamate 869.

The protein belongs to the xanthine dehydrogenase family. As to quaternary structure, homodimer. It depends on Mo-molybdopterin cytosine dinucleotide as a cofactor. [2Fe-2S] cluster serves as cofactor.

The enzyme catalyses an aldehyde + A + H2O = a carboxylate + AH2 + H(+). This is Aldehyde oxidoreductase (mop) from Megalodesulfovibrio gigas (Desulfovibrio gigas).